The sequence spans 118 residues: UPF0251 protein Teth39_0655 (118 aa).

This sequence belongs to the UPF0251 family.

The protein is UPF0251 protein Teth39_0655 of Thermoanaerobacter pseudethanolicus (strain ATCC 33223 / 39E) (Clostridium thermohydrosulfuricum).